We begin with the raw amino-acid sequence, 2073 residues long: MVKLANPLYTEWILEAIQKIKKQKQRPSEERICHAVSTSHGLDKKTVSEQLELSVQDGSVLKVTNKGLASYKDPDNPGRFSSVKPGTFPKSAKGSRGSCNDLRNVDWNKLLRRAIEGLEEPNGSSLKNIEKYLRSQSDLTSTTNNPAFQQRLRLGAKRAVNNGRLLKDGPQYRVNYGSLDGKGAPQYPSAFPSSLPPVSLLPHEKDQPRADPIPICSFCLGTKESNREKKPEELLSCADCGSSGHPSCLKFCPELTTNVKALRWQCIECKTCSACRVQGRNADNMLFCDSCDRGFHMECCDPPLSRMPKGMWICQVCRPKKKGRKLLHEKAAQIKRRYAKPIGRPKNKLKQRLLSVTSDEGSMNAFTGRGSPGRGQKTKVCTTPSSGHAASGKDSSSRLAVTDPTRPGATTKITTTSTYISASTLKVNKKTKGLIDGLTKFFTPSPDGRRSRGEIIDFSKHYRPRKKVSQKQSCTSHVLATGTTQKLKPPPSSLPPPTPISGQSPSSQKSSTATSSPSPQSSSSQCSVPSLSSLTTNSQLKALFDGLSHIYTTQGQSRKKGHPSYAPPKRMRRKTELSSTAKSKAHFFGKRDIRSRFISHSSSSSWGMARGSIFKAIAHFKRTTFLKKHRMLGRLKYKVTPQMGTPSPGKGSLTDGRIKPDQDDDTEIKINIKQESADVNVIGNKDVVTEEDLDVFKQAQELSWEKIECESGVEDCGRYPSVIEFGKYEIQTWYSSPYPQEYARLPKLYLCEFCLKYMKSKNILLRHSKKCGWFHPPANEIYRRKDLSVFEVDGNMSKIYCQNLCLLAKLFLDHKTLYYDVEPFLFYVLTKNDEKGCHLVGYFSKEKLCQQKYNVSCIMIMPQHQRQGFGRFLIDFSYLLSRREGQAGSPEKPLSDLGRLSYLAYWKSVILEYLYHHHERHISIKAISRATGMCPHDIATTLQHLHMIDKRDGRFVIIRREKLILSHMEKLKTCSRANELDPDSLRWTPILISNAAVSEEEREAEKEAERLMEQASCWEKEEQEILSTRANSRQSPAKVQSKNKYLHSPESRPVTGERGQLLELSKESSEEEEEEEDEEEEEEEEEEEEDEEEEEEEEEEEEEENIQSSPPRLTKPQSVAIKRKRPFVLKKKRGRKRRRINSSVTTETISETTEVLNEPFDNSDEERPMPQLEPTCEIEVEEDGRKPVLRKAFQHQPGKKRQTEEEEGKDNHCFKNADPCRNNMNDDSSNLKEGSKDNPEPLKCKQVWPKGTKRGLSKWRQNKERKTGFKLNLYTPPETPMEPDEQVTVEEQKETSEGKTSPSPIRIEEEVKETGEALLPQEENRREETCAPVSPNTSPGEKPEDDLIKPEEEEEEEEEEEEEEEEEEGEEEEGGGNVEKDPDGAKSQEKEEPEISTEKEDSARLDDHEEEEEEDEEPSHNEDHDADDEDDSHMESAEVEKEELPRESFKEVLENQETFLDLNVQPGHSNPEVLMDCGVDLTASCNSEPKELAGDPEAVPESDEEPPPGEQAQKQDQKNSKEVDTEFKEGNPATMEIDSETVQAVQSLTQESSEQDDTFQDCAETQEACRSLQNYTRADQSPQIATTLDDCQQSDHSSPVSSVHSHPGQSVRSVNSPSVPALENSYAQISPDQSAISVPSLQNMETSPMMDVPSVSDHSQQVVDSGFSDLGSIESTTENYENPSSYDSTMGGSICGNGSSQNSCSYSNLTSSSLTQSSCAVTQQMSNISGSCSMLQQTSISSPPTCSVKSPQGCVVERPPSSSQQLAQCSMAANFTPPMQLAEIPETSNANIGLYERMGQSDFGAGHYPQPSATFSLAKLQQLTNTLIDHSLPYSHSAAVTSYANSASLSTPLSNTGLVQLSQSPHSVPGGPQAQATMTPPPNLTPPPMNLPPPLLQRNMAASNIGISHSQRLQTQIASKGHISMRTKSASLSPAAATHQSQIYGRSQTVAMQGPARTLTMQRGMNMSVNLMPAPAYNVNSVNMNMNTLNAMNGYSMSQPMMNSGYHSNHGYMNQTPQYPMQMQMGMMGTQPYAQQPMQTPPHGNMMYTAPGHHGYMNTGMSKQSLNGSYMRR.

Positions 1–77 (MVKLANPLYT…LASYKDPDNP (77 aa)) constitute an SAMD1-like winged helix (WH) domain. A disordered region spans residues 72-97 (KDPDNPGRFSSVKPGTFPKSAKGSRG). The H15 domain occupies 103–176 (RNVDWNKLLR…KDGPQYRVNY (74 aa)). 2 PHD-type zinc fingers span residues 213–272 (IPIC…CKTC) and 269–320 (CKTC…CRPK). Position 355 is a phosphoserine (S355). Disordered stretches follow at residues 360-409 (EGSM…RPGA), 442-531 (FTPS…VPSL), 553-583 (TQGQ…TAKS), and 639-663 (VTPQ…PDQD). The tract at residues 361–717 (GSMNAFTGRG…ECESGVEDCG (357 aa)) is negatively regulates HAT activity. The segment covering 379 to 399 (KVCTTPSSGHAASGKDSSSRL) has biased composition (polar residues). Basic and acidic residues predominate over residues 447 to 460 (DGRRSRGEIIDFSK). A compositionally biased stretch (polar residues) spans 470-485 (QKQSCTSHVLATGTTQ). Residues 488–499 (KPPPSSLPPPTP) are compositionally biased toward pro residues. Residues 501–531 (SGQSPSSQKSSTATSSPSPQSSSSQCSVPSL) are compositionally biased toward low complexity. S647 is modified (phosphoserine). A Glycyl lysine isopeptide (Lys-Gly) (interchain with G-Cter in SUMO2) cross-link involves residue K673. In terms of domain architecture, MYST-type HAT spans 715-989 (DCGRYPSVIE…LDPDSLRWTP (275 aa)). A catalytic region spans residues 718-1008 (RYPSVIEFGK…EEEREAEKEA (291 aa)). The segment at 748–773 (LYLCEFCLKYMKSKNILLRHSKKCGW) adopts a C2HC MYST-type zinc-finger fold. The interval 752–1008 (EFCLKYMKSK…EEEREAEKEA (257 aa)) is interaction with BRPF1. N6-acetyllysine; by autocatalysis is present on K815. Acetyl-CoA is bound by residues 856-860 (SCIMI) and 865-871 (QRQGFGR). E891 serves as the catalytic Proton donor/acceptor. S895 contributes to the acetyl-CoA binding site. Disordered stretches follow at residues 1022-1452 (EQEI…FKEV), 1484-1538 (SCNS…MEID), and 1580-1619 (QSPQ…SPSV). The segment covering 1025–1043 (ILSTRANSRQSPAKVQSKN) has biased composition (polar residues). Residues K1038, K1042, and K1044 each carry the N6-acetyllysine modification. S1048 carries the phosphoserine modification. The segment covering 1069 to 1105 (SEEEEEEEDEEEEEEEEEEEEDEEEEEEEEEEEEEEN) has biased composition (acidic residues). The span at 1106-1117 (IQSSPPRLTKPQ) shows a compositional bias: polar residues. The span at 1121–1140 (IKRKRPFVLKKKRGRKRRRI) shows a compositional bias: basic residues. Low complexity predominate over residues 1142 to 1155 (SSVTTETISETTEV). Residues 1187-1200 (PVLRKAFQHQPGKK) are compositionally biased toward basic residues. 3 stretches are compositionally biased toward basic and acidic residues: residues 1229 to 1243 (SNLK…EPLK), 1306 to 1315 (RIEEEVKETG), and 1341 to 1350 (EKPEDDLIKP). Acidic residues predominate over residues 1351 to 1374 (EEEEEEEEEEEEEEEEEEGEEEEG). Composition is skewed to basic and acidic residues over residues 1378-1390 (VEKD…SQEK) and 1396-1407 (STEKEDSARLDD). Positions 1408–1417 (HEEEEEEDEE) are enriched in acidic residues. The span at 1433–1452 (HMESAEVEKEELPRESFKEV) shows a compositional bias: basic and acidic residues. Residues 1498 to 1507 (AVPESDEEPP) are compositionally biased toward acidic residues. Residues 1513 to 1529 (QKQDQKNSKEVDTEFKE) are compositionally biased toward basic and acidic residues. The interval 1560-2073 (QDCAETQEAC…QSLNGSYMRR (514 aa)) is interaction with RUNX1 and RUNX2. The segment covering 1580–1591 (QSPQIATTLDDC) has biased composition (polar residues). Residues 1594-1611 (SDHSSPVSSVHSHPGQSV) show a composition bias toward low complexity.

Belongs to the MYST (SAS/MOZ) family. Component of the MOZ/MORF complex composed at least of ING5, KAT6A, KAT6B, MEAF6 and one of BRPF1, BRD1/BRPF2 and BRPF3. Interacts with RUNX1 and RUNX2. Post-translationally, autoacetylated. Autoacetylation at Lys-815 is required for proper function. As to expression, ubiquitously expressed, with high levels in heart, pancreas, testis and ovary.

It localises to the nucleus. The catalysed reaction is L-lysyl-[protein] + acetyl-CoA = N(6)-acetyl-L-lysyl-[protein] + CoA + H(+). Functionally, histone acetyltransferase which may be involved in both positive and negative regulation of transcription. Required for RUNX2-dependent transcriptional activation. May be involved in cerebral cortex development. Component of the MOZ/MORF complex which has a histone H3 acetyltransferase activity. The polypeptide is Histone acetyltransferase KAT6B (KAT6B) (Homo sapiens (Human)).